We begin with the raw amino-acid sequence, 173 residues long: MAASVDPLVVGRVIGDVLDMFIPTANMSVYFGPKHITNGCEIKPSTAVNPPKVNISGHSDELYTLVMTDPDAPSPSEPNMREWVHWIVVDIPGGTNPSRGKEILPYMEPRPPVGIHRYILVLFRQNSPVGLMVQQPPSRANFSTRMFAGHFDLGLPVATVYFNAQKEPASRRR.

Ala-2 is modified (N-acetylalanine).

Belongs to the phosphatidylethanolamine-binding protein family. In terms of tissue distribution, expressed in gametophytes and developing seeds.

It is found in the cytoplasm. In terms of biological role, may form complexes with phosphorylated ligands by interfering with kinases and their effectors. Regulates seed germination via the abscisic acid (ABA) and gibberellic acid (GA)signaling pathways. During seed germination, MFT expression is directly repressed by ABI3 or promoted by ABI5 in the ABA signaling pathway. Involved in a negative feedback regulation of ABA signaling. Promotes embryo growth by direct repression of ABI5. In the GA signaling pathway, MFT expression is promoted by the DELLA protein RGL2 during seed germination. May regulate seed germination and fertility through the brassinosteroid (BR) signaling pathway. This Arabidopsis thaliana (Mouse-ear cress) protein is Protein MOTHER of FT and TFL1 (MFT).